A 122-amino-acid polypeptide reads, in one-letter code: Sperm-egg fusion protein LLCFC1 (122 aa).

Residues M1 to G28 form the signal peptide. A disordered region spans residues N27 to F51. The segment covering T38–E49 has biased composition (polar residues).

Its subcellular location is the secreted. In terms of biological role, sperm protein required for fusion of sperm with the egg membrane during fertilization. The sequence is that of Sperm-egg fusion protein LLCFC1 from Homo sapiens (Human).